Reading from the N-terminus, the 346-residue chain is Haptoglobin-related protein (346 aa).

Positions 1–16 form a signal peptide, not cleaved; sequence DLGAVIYLLLWGRQLF. One can recognise a Sushi domain in the interval 32–85; it reads FPKPPEIANGYVEHLFRYQRKNYYRLRTEGDGVYTLNDKKQWINKAVGDKLPEC. The Peptidase S1 domain occupies 102–344; it reads ILGGHLDAKG…IHVWVQKTIA (243 aa). 2 cysteine pairs are disulfide-bonded: cysteine 249–cysteine 280 and cysteine 291–cysteine 321.

This sequence belongs to the peptidase S1 family.

Its subcellular location is the secreted. Functionally, primate-specific plasma protein associated with apolipoprotein L-I (apoL-I)-containing high-density lipoprotein (HDL). Binds hemoglobin with high affinity and may contribute to the clearance of cell-free hemoglobin to allow hepatic recycling of heme iron. This Pan troglodytes (Chimpanzee) protein is Haptoglobin-related protein (HPR).